Here is a 512-residue protein sequence, read N- to C-terminus: Maturase K (512 aa).

It belongs to the intron maturase 2 family. MatK subfamily.

The protein resides in the plastid. It localises to the chloroplast. Usually encoded in the trnK tRNA gene intron. Probably assists in splicing its own and other chloroplast group II introns. This chain is Maturase K, found in Lilium tsingtauense (Twilight lily).